The following is a 232-amino-acid chain: Ubiquinone biosynthesis O-methyltransferase (232 aa).

Residues arginine 36, glycine 55, aspartate 76, and leucine 120 each coordinate S-adenosyl-L-methionine.

The protein belongs to the methyltransferase superfamily. UbiG/COQ3 family.

The enzyme catalyses a 3-demethylubiquinol + S-adenosyl-L-methionine = a ubiquinol + S-adenosyl-L-homocysteine + H(+). It catalyses the reaction a 3-(all-trans-polyprenyl)benzene-1,2-diol + S-adenosyl-L-methionine = a 2-methoxy-6-(all-trans-polyprenyl)phenol + S-adenosyl-L-homocysteine + H(+). Its pathway is cofactor biosynthesis; ubiquinone biosynthesis. In terms of biological role, O-methyltransferase that catalyzes the 2 O-methylation steps in the ubiquinone biosynthetic pathway. The polypeptide is Ubiquinone biosynthesis O-methyltransferase (Pseudomonas fluorescens (strain ATCC BAA-477 / NRRL B-23932 / Pf-5)).